A 296-amino-acid polypeptide reads, in one-letter code: Polyadenylate-binding protein 2 (296 aa).

The tract at residues 1 to 102 (MAAVSSAASL…EEEPGELTGD (102 aa)) is disordered. Gly residues-rich tracts occupy residues 19–31 (LRGG…GGQD) and 71–82 (GRGGSGGGGAGG). The span at 84 to 97 (EELEDEELEEEEPG) shows a compositional bias: acidic residues. Positions 107 to 141 (DPELEAIKARVREMEEEAEKLKELQNEVEKQMNMS) form a coiled coil. The necessary for homooligomerization stretch occupies residues 146–296 (NAGPVIMSIE…ARVTSWYTPY (151 aa)). Positions 163–240 (RSIYVGNVDY…RQIKVVPKRT (78 aa)) constitute an RRM domain.

Monomer and homooligomer. Binds RNA as a monomer and oligomerizes when bound to poly(A).

The protein localises to the nucleus. It localises to the cytoplasm. Its function is as follows. Involved in the 3'-end formation of mRNA precursors (pre-mRNA) by the addition of a poly(A) tail of 200-250 nt to the upstream cleavage product. Stimulates poly(A) polymerase (PAPOLA) conferring processivity on the poly(A) tail elongation reaction and also controls the poly(A) tail length. Increases the affinity of poly(A) polymerase for RNA. Binds to poly(A) and to poly(G) with high affinity. May protect the poly(A) tail from degradation. The protein is Polyadenylate-binding protein 2 of Xenopus tropicalis (Western clawed frog).